The sequence spans 1343 residues: DNA-directed RNA polymerase subunit beta (1343 aa).

Belongs to the RNA polymerase beta chain family. As to quaternary structure, the RNAP catalytic core consists of 2 alpha, 1 beta, 1 beta' and 1 omega subunit. When a sigma factor is associated with the core the holoenzyme is formed, which can initiate transcription.

It catalyses the reaction RNA(n) + a ribonucleoside 5'-triphosphate = RNA(n+1) + diphosphate. DNA-dependent RNA polymerase catalyzes the transcription of DNA into RNA using the four ribonucleoside triphosphates as substrates. The polypeptide is DNA-directed RNA polymerase subunit beta (Haemophilus influenzae (strain 86-028NP)).